Reading from the N-terminus, the 464-residue chain is MTDADRARRIFGLETEYGVQHWNPEGRPLSPEEVVRYLFRPVVEWGRSSNVFVANGSRLYLDVGSHPEYATAECSTLDELIASDGAGDLLLHDLVVQAEERMAADGVGGRIHLYRNNADSSGSSYGSHENYLLRRRTEYRRLTEALVPFLVSRQILVGAGRVVPAGTWPEGEGPAHFAFSQRADFVQDGVSSSTTRSRPIINTRDEPHADASEYRRLHVIVGDTNLSEHTHLLRFGATDLLLRMIEAGFPLGDRVVAHPTRAVRQISHDLTGTARIALREGEASALELQEHYLERARAFVAAEGAHHDRVGEILTLWGEVLDAVRTGDRSRIEDRIDWAIKLRLLEDYRARHDLGWDAPRLAQLDLAFHDIDPDRGLFRLLLRRGAVARLLPEDAARSAVETAPPTTRARVRADFVARARERGLDYAVDWTTLKLTDHPLHAIVTKDPFDTSSAAVDRLFGRIA.

E14 provides a ligand contact to Mg(2+). R58 provides a ligand contact to ATP. Y60 serves as a coordination point for Mg(2+). D62 serves as the catalytic Proton acceptor. E68 contributes to the Mg(2+) binding site. ATP contacts are provided by T71 and W430.

This sequence belongs to the Pup ligase/Pup deamidase family. Pup-conjugating enzyme subfamily.

The enzyme catalyses ATP + [prokaryotic ubiquitin-like protein]-L-glutamate + [protein]-L-lysine = ADP + phosphate + N(6)-([prokaryotic ubiquitin-like protein]-gamma-L-glutamyl)-[protein]-L-lysine.. Its pathway is protein degradation; proteasomal Pup-dependent pathway. The protein operates within protein modification; protein pupylation. Functionally, catalyzes the covalent attachment of the prokaryotic ubiquitin-like protein modifier Pup to the proteasomal substrate proteins, thereby targeting them for proteasomal degradation. This tagging system is termed pupylation. The ligation reaction involves the side-chain carboxylate of the C-terminal glutamate of Pup and the side-chain amino group of a substrate lysine. The sequence is that of Pup--protein ligase from Micrococcus luteus (strain ATCC 4698 / DSM 20030 / JCM 1464 / CCM 169 / CCUG 5858 / IAM 1056 / NBRC 3333 / NCIMB 9278 / NCTC 2665 / VKM Ac-2230) (Micrococcus lysodeikticus).